A 490-amino-acid polypeptide reads, in one-letter code: Betaine aldehyde dehydrogenase (490 aa).

Residues serine 26, isoleucine 27, and aspartate 93 each contribute to the K(+) site. 150–152 (GAW) lines the NAD(+) pocket. Lysine 162 serves as the catalytic Charge relay system. Residue 176–179 (KPSE) participates in NAD(+) binding. Valine 180 lines the K(+) pocket. 230–233 (GVAT) lines the NAD(+) pocket. K(+) is bound at residue leucine 246. Residue glutamate 252 is the Proton acceptor of the active site. Residues glycine 254, cysteine 286, and glutamate 387 each contribute to the NAD(+) site. Cysteine 286 serves as the catalytic Nucleophile. Cysteine 286 carries the cysteine sulfenic acid (-SOH) modification. The K(+) site is built by lysine 457 and glycine 460. The active-site Charge relay system is glutamate 464.

Belongs to the aldehyde dehydrogenase family. Dimer of dimers. It depends on K(+) as a cofactor.

The catalysed reaction is betaine aldehyde + NAD(+) + H2O = glycine betaine + NADH + 2 H(+). It participates in amine and polyamine biosynthesis; betaine biosynthesis via choline pathway; betaine from betaine aldehyde: step 1/1. In terms of biological role, involved in the biosynthesis of the osmoprotectant glycine betaine. Catalyzes the irreversible oxidation of betaine aldehyde to the corresponding acid. The polypeptide is Betaine aldehyde dehydrogenase (Stutzerimonas stutzeri (strain A1501) (Pseudomonas stutzeri)).